A 112-amino-acid polypeptide reads, in one-letter code: uncharacterized protein (112 aa).

It to M.jannaschii MJ1244 and M.thermoautotrophicum MTH1110.

This is an uncharacterized protein from Methanocaldococcus jannaschii (strain ATCC 43067 / DSM 2661 / JAL-1 / JCM 10045 / NBRC 100440) (Methanococcus jannaschii).